Consider the following 411-residue polypeptide: Translation initiation factor 2 subunit gamma (411 aa).

One can recognise a tr-type G domain in the interval 9–203 (QAEVNIGMVG…AIEDFIPTPK (195 aa)). The tract at residues 18-25 (GHVDHGKT) is G1. Mg(2+)-binding residues include Asp-21, Thr-25, Gly-46, and Thr-48. 21–26 (DHGKTT) contributes to the GTP binding site. The segment at 46-50 (GITIK) is G2. Positions 61, 64, 73, and 76 each coordinate Zn(2+). Residues 90-93 (DAPG) are G3. Residues 146-149 (NKIE) and 181-183 (SAL) contribute to the GTP site. A G4 region spans residues 146–149 (NKIE). Residues 181–183 (SAL) are G5.

It belongs to the TRAFAC class translation factor GTPase superfamily. Classic translation factor GTPase family. EIF2G subfamily. Heterotrimer composed of an alpha, a beta and a gamma chain. Mg(2+) is required as a cofactor.

The catalysed reaction is GTP + H2O = GDP + phosphate + H(+). In terms of biological role, eIF-2 functions in the early steps of protein synthesis by forming a ternary complex with GTP and initiator tRNA. The polypeptide is Translation initiation factor 2 subunit gamma (Pyrococcus abyssi (strain GE5 / Orsay)).